The sequence spans 573 residues: Leucine aminopeptidase, chloroplastic (573 aa).

Residues 1–53 (MATLRVSSLLASSPSSLHCNPSVFTKCQSSPRWAFSFSVTPLCSRRSKRIVHC) constitute a chloroplast transit peptide. Positions 342 and 347 each coordinate Mn(2+). Lysine 354 is a catalytic residue. The Mn(2+) site is built by aspartate 367, aspartate 427, and glutamate 429. Arginine 431 is a catalytic residue.

This sequence belongs to the peptidase M17 family. Homohexamer (dimer of homotrimers). Mn(2+) serves as cofactor. As to expression, in tubers and floral buds of untreated plants. After abscisic acid (ABA) treatment or mechanical wounding is mostly accumulated in leaves, to a lesser extent in stems, but not in roots.

The protein resides in the plastid. It localises to the chloroplast. It carries out the reaction Release of an N-terminal amino acid, Xaa-|-Yaa-, in which Xaa is preferably Leu, but may be other amino acids including Pro although not Arg or Lys, and Yaa may be Pro. Amino acid amides and methyl esters are also readily hydrolyzed, but rates on arylamides are exceedingly low.. The enzyme catalyses Release of N-terminal proline from a peptide.. In terms of biological role, presumably involved in the processing and regular turnover of intracellular proteins. This Solanum tuberosum (Potato) protein is Leucine aminopeptidase, chloroplastic (LAP).